Consider the following 635-residue polypeptide: Interferon-induced GTP-binding protein Mx2 (635 aa).

Positions 31-304 (DLALPAIAVI…LVQHIEKSMP (274 aa)) constitute a Dynamin-type G domain. The G1 motif stretch occupies residues 41-48 (GDQSSGKS). Residue 41–48 (GDQSSGKS) coordinates GTP. Residues 66–68 (VTR) form a G2 motif region. The tract at residues 142–145 (DLPG) is G3 motif. GTP-binding positions include 142–146 (DLPGI) and 211–214 (TKPD). Residues 211–214 (TKPD) are G4 motif. The tract at residues 243–246 (KCRG) is G5 motif. The 87-residue stretch at 549-635 (LREMMLHLKS…MKAHNYLVEF (87 aa)) folds into the GED domain.

It belongs to the TRAFAC class dynamin-like GTPase superfamily. Dynamin/Fzo/YdjA family.

The protein resides in the nucleus. Its subcellular location is the cytoplasm. Functionally, does not inhibit strain RB-1 of the fish pathogen, infectious hematopoietic necrosis virus (IHNV). This chain is Interferon-induced GTP-binding protein Mx2, found in Oncorhynchus mykiss (Rainbow trout).